The sequence spans 240 residues: Enoyl-CoA delta isomerase 1, peroxisomal (240 aa).

Residues 238–240 (SKL) carry the Microbody targeting signal motif.

The protein belongs to the enoyl-CoA hydratase/isomerase family.

The protein resides in the peroxisome. It carries out the reaction a (3Z)-enoyl-CoA = a 4-saturated (2E)-enoyl-CoA. It catalyses the reaction a (3E)-enoyl-CoA = a 4-saturated (2E)-enoyl-CoA. Its pathway is lipid metabolism; fatty acid beta-oxidation. Its function is as follows. Able to isomerize both 3-cis and 3-trans double bonds into the 2-trans form in a range of enoyl-CoA species. Essential for the beta oxidation of unsaturated fatty acids. In Arabidopsis thaliana (Mouse-ear cress), this protein is Enoyl-CoA delta isomerase 1, peroxisomal.